The primary structure comprises 393 residues: Argininosuccinate synthase (393 aa).

Residues 10-18 (AYSGGLDTS) and Ala37 each bind ATP. L-citrulline is bound at residue Tyr88. ATP is bound at residue Gly118. L-aspartate contacts are provided by Thr120, Asn124, and Asp125. Asn124 serves as a coordination point for L-citrulline. Residues Arg128, Ser176, Ser185, Glu261, and Tyr273 each contribute to the L-citrulline site.

Belongs to the argininosuccinate synthase family. Type 1 subfamily. As to quaternary structure, homotetramer.

The protein localises to the cytoplasm. It catalyses the reaction L-citrulline + L-aspartate + ATP = 2-(N(omega)-L-arginino)succinate + AMP + diphosphate + H(+). The protein operates within amino-acid biosynthesis; L-arginine biosynthesis; L-arginine from L-ornithine and carbamoyl phosphate: step 2/3. In Carsonella ruddii (strain PV), this protein is Argininosuccinate synthase.